The chain runs to 74 residues: Conotoxin TsMLCL-04 (74 aa).

The signal sequence occupies residues 1–19; the sequence is MLCLPVFIILLLLASPAAP. Residues 20 to 60 constitute a propeptide that is removed on maturation; sequence NPLETRIQRDLIRAALEDADMKTNERFLEGVISTIKDFAGK.

This sequence belongs to the conotoxin T superfamily. Contains 2 disulfide bonds that can be either 'C1-C3, C2-C4' or 'C1-C4, C2-C3', since these disulfide connectivities have been observed for conotoxins with cysteine framework V (for examples, see AC P0DQQ7 and AC P81755). Expressed by the venom duct.

The protein resides in the secreted. In Conus tessulatus (Tessellate cone), this protein is Conotoxin TsMLCL-04.